The chain runs to 458 residues: MACNSSGCESGCYDREKDNGSKIVDDAVSGGGNHESVCVKCKCNAPMTFGDGGFDDGRFCADCFRNNVFGKFRLAVTSHAMITPSDNVLVAFSGGSSSRVSLQFVHELQIKALKNYEASRDRSLPVFGVGVAFVDETAAFPALSTEMIDAIEWVRYTVSCLSPPAKDLHVVPVESIFGSDSLDARDRLLKLLDSVPDDTGKEDLLLHLKMLSLQKVAAENGYNRLVLGSCTSRIASHVLTATVKGRGYSLSADIQHVDARWKVPIVLPLRDCVRLEITRLCLLDGLKTVELACRSQCGINDLVSSFVALLQEENPSRECTIVRTAAKLTPFYFNKIPETDDSNVPMATQRRLKRFNLKYDGSMTTEAFCPICNGPLNRSDSSELDTFEEGQESDVLYAACCSSCRFQILPQDGSSLEQFSSFLPDHMISQVKHQKVDSQAYLREKIKDCLLLDDEEVV.

It belongs to the CTU2/NCS2 family.

It localises to the cytoplasm. Its pathway is tRNA modification; 5-methoxycarbonylmethyl-2-thiouridine-tRNA biosynthesis. Plays a central role in 2-thiolation of mcm(5)S(2)U at tRNA wobble positions of tRNA(Lys), tRNA(Glu) and tRNA(Gln). May act by forming a heterodimer with NCS6/CTU1 that ligates sulfur from thiocarboxylated URM1 onto the uridine of tRNAs at wobble position. The protein is Cytoplasmic tRNA 2-thiolation protein 2 of Arabidopsis thaliana (Mouse-ear cress).